Here is a 252-residue protein sequence, read N- to C-terminus: uncharacterized protein (252 aa).

It belongs to the GSP E family.

This is an uncharacterized protein from Methanocaldococcus jannaschii (strain ATCC 43067 / DSM 2661 / JAL-1 / JCM 10045 / NBRC 100440) (Methanococcus jannaschii).